Here is a 228-residue protein sequence, read N- to C-terminus: 7-cyano-7-deazaguanine synthase (228 aa).

Residue 16 to 26 coordinates ATP; the sequence is FSGGQDSTTCL. Residues Cys193, Cys201, Cys204, and Cys207 each contribute to the Zn(2+) site.

This sequence belongs to the QueC family. It depends on Zn(2+) as a cofactor.

The enzyme catalyses 7-carboxy-7-deazaguanine + NH4(+) + ATP = 7-cyano-7-deazaguanine + ADP + phosphate + H2O + H(+). It functions in the pathway purine metabolism; 7-cyano-7-deazaguanine biosynthesis. In terms of biological role, catalyzes the ATP-dependent conversion of 7-carboxy-7-deazaguanine (CDG) to 7-cyano-7-deazaguanine (preQ(0)). The protein is 7-cyano-7-deazaguanine synthase of Pasteurella multocida (strain Pm70).